The following is a 423-amino-acid chain: D-tagatose-1,6-bisphosphate aldolase subunit GatZ (423 aa).

Belongs to the GatZ/KbaZ family. GatZ subfamily. Forms a complex with GatY.

It participates in carbohydrate metabolism; D-tagatose 6-phosphate degradation; D-glyceraldehyde 3-phosphate and glycerone phosphate from D-tagatose 6-phosphate: step 2/2. Functionally, component of the tagatose-1,6-bisphosphate aldolase GatYZ that is required for full activity and stability of the Y subunit. Could have a chaperone-like function for the proper and stable folding of GatY. When expressed alone, GatZ does not show any aldolase activity. Is involved in the catabolism of galactitol. This chain is D-tagatose-1,6-bisphosphate aldolase subunit GatZ, found in Salmonella dublin (strain CT_02021853).